Reading from the N-terminus, the 378-residue chain is Biotin synthase, mitochondrial (378 aa).

A mitochondrion-targeting transit peptide spans 1–26; the sequence is MMLVRSVFRSQLRPSVSGGLQSASCY. The Radical SAM core domain occupies 79–308; sequence REVQQCTLLS…KAMVRLSAGR (230 aa). [4Fe-4S] cluster is bound by residues Cys94, Cys98, and Cys101. The [2Fe-2S] cluster site is built by Cys138, Cys171, Cys231, and Arg303. A disordered region spans residues 357 to 378; sequence PPSFSEDDSESENCEKVASASH.

The protein belongs to the radical SAM superfamily. Biotin synthase family. [4Fe-4S] cluster serves as cofactor. [2Fe-2S] cluster is required as a cofactor.

It is found in the mitochondrion. It catalyses the reaction (4R,5S)-dethiobiotin + (sulfur carrier)-SH + 2 reduced [2Fe-2S]-[ferredoxin] + 2 S-adenosyl-L-methionine = (sulfur carrier)-H + biotin + 2 5'-deoxyadenosine + 2 L-methionine + 2 oxidized [2Fe-2S]-[ferredoxin]. It participates in cofactor biosynthesis; biotin biosynthesis; biotin from 7,8-diaminononanoate: step 2/2. The polypeptide is Biotin synthase, mitochondrial (BIO2) (Arabidopsis thaliana (Mouse-ear cress)).